The chain runs to 176 residues: Lipocalin-1 (176 aa).

The signal sequence occupies residues M1–A19. An intrachain disulfide couples C80 to C171.

It belongs to the calycin superfamily. Lipocalin family. In terms of assembly, predominantly monomer. May form homodimer. Interacts with LMBR1L; this interaction mediates the endocytosis of LCN1.

It localises to the secreted. In terms of biological role, could play a role in taste reception. Could be necessary for the concentration and delivery of sapid molecules in the gustatory system. Can bind various ligands, with chemical structures ranging from lipids and retinoids to the macrocyclic antibiotic rifampicin and even to microbial siderophores. Exhibits an extremely wide ligand pocket. This chain is Lipocalin-1 (LCN1), found in Sus scrofa (Pig).